Here is a 249-residue protein sequence, read N- to C-terminus: 1-(5-phosphoribosyl)-5-[(5-phosphoribosylamino)methylideneamino] imidazole-4-carboxamide isomerase (249 aa).

Asp-10 serves as the catalytic Proton acceptor. The active-site Proton donor is the Asp-136.

It belongs to the HisA/HisF family.

It is found in the cytoplasm. The catalysed reaction is 1-(5-phospho-beta-D-ribosyl)-5-[(5-phospho-beta-D-ribosylamino)methylideneamino]imidazole-4-carboxamide = 5-[(5-phospho-1-deoxy-D-ribulos-1-ylimino)methylamino]-1-(5-phospho-beta-D-ribosyl)imidazole-4-carboxamide. It participates in amino-acid biosynthesis; L-histidine biosynthesis; L-histidine from 5-phospho-alpha-D-ribose 1-diphosphate: step 4/9. The protein is 1-(5-phosphoribosyl)-5-[(5-phosphoribosylamino)methylideneamino] imidazole-4-carboxamide isomerase of Symbiobacterium thermophilum (strain DSM 24528 / JCM 14929 / IAM 14863 / T).